Reading from the N-terminus, the 253-residue chain is Major prion protein (253 aa).

A signal peptide spans 1–22 (MANLGCWMLVLFVATWSDLGLC). Residues 23–38 (KKRPKPGGWNTGGSRY) form an interaction with ADGRG6 region. The interval 23–230 (KKRPKPGGWN…ESQAYYQRGS (208 aa)) is interaction with GRB2, ERI3 and SYN1. The disordered stretch occupies residues 26–108 (PKPGGWNTGG…WNKPSKPKTS (83 aa)). 5 repeat units span residues 51–59 (PQGGGGWGQ), 60–67 (PHGGGWGQ), 68–75 (PHGGGWGQ), 76–83 (PHGGGWGQ), and 84–91 (PHGGGWGQ). A 5 X 8 AA tandem repeats of P-H-G-G-G-W-G-Q region spans residues 51 to 91 (PQGGGGWGQPHGGGWGQPHGGGWGQPHGGGWGQPHGGGWGQ). Gly residues predominate over residues 52–95 (QGGGGWGQPHGGGWGQPHGGGWGQPHGGGWGQPHGGGWGQGGGT). Cu(2+)-binding residues include His-61, Gly-62, Gly-63, His-69, Gly-70, Gly-71, His-77, Gly-78, Gly-79, His-85, Gly-86, and Gly-87. Cysteines 179 and 214 form a disulfide. 2 N-linked (GlcNAc...) asparagine glycosylation sites follow: Asn-181 and Asn-197. Ser-230 carries GPI-anchor amidated serine lipidation. Residues 231–253 (SMVLFSSPPVILLISFLIFLIVG) constitute a propeptide, removed in mature form.

This sequence belongs to the prion family. In terms of assembly, monomer and homodimer. Has a tendency to aggregate into amyloid fibrils containing a cross-beta spine, formed by a steric zipper of superposed beta-strands. Soluble oligomers may represent an intermediate stage on the path to fibril formation. Copper binding may promote oligomerization. Interacts with GRB2, APP, ERI3/PRNPIP and SYN1. Mislocalized cytosolically exposed PrP interacts with MGRN1; this interaction alters MGRN1 subcellular location and causes lysosomal enlargement. Interacts with APP. Interacts with KIAA1191. Interacts with ADGRG6.

The protein localises to the cell membrane. Its subcellular location is the golgi apparatus. Functionally, its primary physiological function is unclear. May play a role in neuronal development and synaptic plasticity. May be required for neuronal myelin sheath maintenance. May promote myelin homeostasis through acting as an agonist for ADGRG6 receptor. May play a role in iron uptake and iron homeostasis. Soluble oligomers are toxic to cultured neuroblastoma cells and induce apoptosis (in vitro). Association with GPC1 (via its heparan sulfate chains) targets PRNP to lipid rafts. Also provides Cu(2+) or Zn(2+) for the ascorbate-mediated GPC1 deaminase degradation of its heparan sulfate side chains. In Colobus guereza (Mantled guereza), this protein is Major prion protein (PRNP).